A 733-amino-acid chain; its full sequence is Polyribonucleotide nucleotidyltransferase (733 aa).

Mg(2+) contacts are provided by aspartate 488 and aspartate 494. The KH domain maps to 555–614 (PRIEMMTIPVEKIREVIGSGGKVIREIVEQTGAKINIEDDGTIKIASPDTKSIETAKSWI). The S1 motif domain occupies 624 to 692 (GTIYQGTVVK…ERGKIRLSMK (69 aa)). Positions 698-733 (TGKEIPQDDLIKTEKEQNPDEKNKSEKKRHNRKKED) are disordered. Residues 702 to 721 (IPQDDLIKTEKEQNPDEKNK) are compositionally biased toward basic and acidic residues. Basic residues predominate over residues 722–733 (SEKKRHNRKKED).

Belongs to the polyribonucleotide nucleotidyltransferase family. The cofactor is Mg(2+).

Its subcellular location is the cytoplasm. It catalyses the reaction RNA(n+1) + phosphate = RNA(n) + a ribonucleoside 5'-diphosphate. Functionally, involved in mRNA degradation. Catalyzes the phosphorolysis of single-stranded polyribonucleotides processively in the 3'- to 5'-direction. The sequence is that of Polyribonucleotide nucleotidyltransferase from Bartonella bacilliformis (strain ATCC 35685 / KC583 / Herrer 020/F12,63).